A 352-amino-acid chain; its full sequence is Spermidine/putrescine import ATP-binding protein PotA (352 aa).

The ABC transporter domain occupies 7–237; that stretch reads IRLENVTKSF…PVNAFVADFI (231 aa). Residue 39–46 coordinates ATP; it reads GPSGCGKT.

This sequence belongs to the ABC transporter superfamily. Spermidine/putrescine importer (TC 3.A.1.11.1) family. As to quaternary structure, the complex is composed of two ATP-binding proteins (PotA), two transmembrane proteins (PotB and PotC) and a solute-binding protein (PotD).

It localises to the cell membrane. It catalyses the reaction ATP + H2O + polyamine-[polyamine-binding protein]Side 1 = ADP + phosphate + polyamineSide 2 + [polyamine-binding protein]Side 1.. In terms of biological role, part of the ABC transporter complex PotABCD involved in spermidine/putrescine import. Responsible for energy coupling to the transport system. The polypeptide is Spermidine/putrescine import ATP-binding protein PotA (Acetivibrio thermocellus (strain ATCC 27405 / DSM 1237 / JCM 9322 / NBRC 103400 / NCIMB 10682 / NRRL B-4536 / VPI 7372) (Clostridium thermocellum)).